A 456-amino-acid polypeptide reads, in one-letter code: Bifunctional protein GlmU (456 aa).

The interval 1 to 229 (MLNNAMSVVI…LSEVEGVNNR (229 aa)) is pyrophosphorylase. UDP-N-acetyl-alpha-D-glucosamine contacts are provided by residues 11 to 14 (LAAG), lysine 25, glutamine 76, 81 to 82 (GT), 103 to 105 (YGD), glycine 140, glutamate 154, asparagine 169, and asparagine 227. Aspartate 105 provides a ligand contact to Mg(2+). Mg(2+) is bound at residue asparagine 227. Positions 230–250 (LQLSRLERVYQSEQAEKLLLA) are linker. The tract at residues 251-456 (GVMLRDPARF…EGWRRPVKKK (206 aa)) is N-acetyltransferase. Arginine 333 and lysine 351 together coordinate UDP-N-acetyl-alpha-D-glucosamine. Histidine 363 functions as the Proton acceptor in the catalytic mechanism. Tyrosine 366 and asparagine 377 together coordinate UDP-N-acetyl-alpha-D-glucosamine. Acetyl-CoA is bound by residues alanine 380, 386-387 (NY), serine 405, alanine 423, and arginine 440.

In the N-terminal section; belongs to the N-acetylglucosamine-1-phosphate uridyltransferase family. This sequence in the C-terminal section; belongs to the transferase hexapeptide repeat family. In terms of assembly, homotrimer. Requires Mg(2+) as cofactor.

It localises to the cytoplasm. It carries out the reaction alpha-D-glucosamine 1-phosphate + acetyl-CoA = N-acetyl-alpha-D-glucosamine 1-phosphate + CoA + H(+). The enzyme catalyses N-acetyl-alpha-D-glucosamine 1-phosphate + UTP + H(+) = UDP-N-acetyl-alpha-D-glucosamine + diphosphate. It functions in the pathway nucleotide-sugar biosynthesis; UDP-N-acetyl-alpha-D-glucosamine biosynthesis; N-acetyl-alpha-D-glucosamine 1-phosphate from alpha-D-glucosamine 6-phosphate (route II): step 2/2. It participates in nucleotide-sugar biosynthesis; UDP-N-acetyl-alpha-D-glucosamine biosynthesis; UDP-N-acetyl-alpha-D-glucosamine from N-acetyl-alpha-D-glucosamine 1-phosphate: step 1/1. Its pathway is bacterial outer membrane biogenesis; LPS lipid A biosynthesis. Functionally, catalyzes the last two sequential reactions in the de novo biosynthetic pathway for UDP-N-acetylglucosamine (UDP-GlcNAc). The C-terminal domain catalyzes the transfer of acetyl group from acetyl coenzyme A to glucosamine-1-phosphate (GlcN-1-P) to produce N-acetylglucosamine-1-phosphate (GlcNAc-1-P), which is converted into UDP-GlcNAc by the transfer of uridine 5-monophosphate (from uridine 5-triphosphate), a reaction catalyzed by the N-terminal domain. The polypeptide is Bifunctional protein GlmU (Escherichia coli O45:K1 (strain S88 / ExPEC)).